The sequence spans 169 residues: uncharacterized protein (169 aa).

It localises to the mitochondrion. This is an uncharacterized protein from Marchantia polymorpha (Common liverwort).